Consider the following 136-residue polypeptide: Large-conductance mechanosensitive channel (136 aa).

3 consecutive transmembrane segments (helical) span residues Ile15–Val35, Ile38–Gln58, and Gly80–Val100.

This sequence belongs to the MscL family. As to quaternary structure, homopentamer.

The protein resides in the cell inner membrane. Channel that opens in response to stretch forces in the membrane lipid bilayer. May participate in the regulation of osmotic pressure changes within the cell. This Bartonella tribocorum (strain CIP 105476 / IBS 506) protein is Large-conductance mechanosensitive channel.